We begin with the raw amino-acid sequence, 464 residues long: Arabinose-proton symporter (464 aa).

12 helical membrane passes run 21-43, 63-85, 92-111, 116-138, 150-172, 185-207, 266-288, 303-325, 332-354, 364-386, 398-420, and 424-446; these read GFVI…DTAV, GLVI…FLSD, ILMT…ALSQ, LIIA…VTYI, LSSL…NLAV, GWRW…LLVV, ALVI…ITYY, GFVT…VLLI, KLMS…SFYF, VLIL…IMIS, AGIA…PMMI, and GLAY…VVTI.

The protein belongs to the major facilitator superfamily. Sugar transporter (TC 2.A.1.1) family.

It localises to the cell membrane. The enzyme catalyses L-arabinose(in) + H(+)(in) = L-arabinose(out) + H(+)(out). It carries out the reaction D-galactose(in) + H(+)(in) = D-galactose(out) + H(+)(out). The catalysed reaction is D-xylose(in) + H(+)(in) = D-xylose(out) + H(+)(out). Functionally, uptake of L-arabinose across the cytoplasmic membrane with the concomitant transport of protons into the cell (symport system). In the presence of inducing amounts of L-arabinose, can import both D-galactose and D-xylose. Can also transport the disaccharide alpha-1,5-arabinobiose. The protein is Arabinose-proton symporter (araE) of Bacillus subtilis (strain 168).